The chain runs to 288 residues: Nucleotide-binding protein Tola_2941 (288 aa).

An ATP-binding site is contributed by 8–15; it reads GRSGSGKT. 56 to 59 contacts GTP; sequence DVRN.

The protein belongs to the RapZ-like family.

Displays ATPase and GTPase activities. The sequence is that of Nucleotide-binding protein Tola_2941 from Tolumonas auensis (strain DSM 9187 / NBRC 110442 / TA 4).